We begin with the raw amino-acid sequence, 94 residues long: Co-chaperonin GroES (94 aa).

It belongs to the GroES chaperonin family. In terms of assembly, heptamer of 7 subunits arranged in a ring. Interacts with the chaperonin GroEL.

It localises to the cytoplasm. Together with the chaperonin GroEL, plays an essential role in assisting protein folding. The GroEL-GroES system forms a nano-cage that allows encapsulation of the non-native substrate proteins and provides a physical environment optimized to promote and accelerate protein folding. GroES binds to the apical surface of the GroEL ring, thereby capping the opening of the GroEL channel. This chain is Co-chaperonin GroES, found in Streptococcus agalactiae serotype III (strain NEM316).